Here is a 255-residue protein sequence, read N- to C-terminus: MNPPPLIRLQDVTVKIQGRTLIENVTFDINSGEIITVIGPNGAGKSTLAKALLGIQPLSRGEVLRRPGLKIGYMPQRFHIDASLPLTVKRFLQLAHNPQRWREALQRVEMEHVAKQPMHTLSGGELQRVLLARALQRAPDLLVLDEPAQGVDVTGQAELYRLIRSLRDELHCGALLVSHDLHLVMASTDQVLCLNRHICCAGHPEKVSNEPAFINLFGTQAARSLAVYHHHHDHHHHTDGTVAAGSECSHGDQHA.

Positions 7–220 constitute an ABC transporter domain; that stretch reads IRLQDVTVKI…PAFINLFGTQ (214 aa). 39–46 provides a ligand contact to ATP; it reads GPNGAGKS. The segment at 229-255 is disordered; sequence HHHHDHHHHTDGTVAAGSECSHGDQHA.

It belongs to the ABC transporter superfamily. Zinc importer (TC 3.A.1.15.5) family. In terms of assembly, the complex is composed of two ATP-binding proteins (ZnuC), two transmembrane proteins (ZnuB) and a solute-binding protein (ZnuA).

The protein resides in the cell inner membrane. It catalyses the reaction Zn(2+)(out) + ATP(in) + H2O(in) = Zn(2+)(in) + ADP(in) + phosphate(in) + H(+)(in). Part of the ABC transporter complex ZnuABC involved in zinc import. Responsible for energy coupling to the transport system. This Hahella chejuensis (strain KCTC 2396) protein is Zinc import ATP-binding protein ZnuC 1.